The sequence spans 62 residues: Calmodulin regulator protein PCP4 (62 aa).

The tract at residues 1-39 (MSERQSAGATNGKDKTSGDNDGQKKVQEEFDIDMDAPET) is disordered. Positions 12–28 (GKDKTSGDNDGQKKVQE) are enriched in basic and acidic residues. The interval 28–40 (EEFDIDMDAPETE) is acidic; binds calcium and is required for modulating the calcium-binding kinetics of calmodulin. The region spanning 39–62 (TERAAVAIQSQFRKFQKKKAGSQS) is the IQ domain.

It belongs to the PCP4 family. As to quaternary structure, binds to both calcium-free and calcium-bound calmodulin. The affinity for the calcium-bound form is 50-fold greater.

In terms of biological role, functions as a modulator of calcium-binding by calmodulin. Thereby, regulates calmodulin activity and the different processes it controls. For instance, may play a role in neuronal differentiation through activation of calmodulin-dependent kinase signaling pathways. The polypeptide is Calmodulin regulator protein PCP4 (Mus musculus (Mouse)).